The following is a 157-amino-acid chain: Protein BeeE (157 aa).

This sequence belongs to the phage portal family.

This is Protein BeeE (beeE) from Escherichia coli (strain K12).